Here is a 98-residue protein sequence, read N- to C-terminus: Acylphosphatase-1 (98 aa).

The Acylphosphatase-like domain maps to 8–98 (SVDYEVFGKV…LEHSTFSICK (91 aa)). Residues R23 and N41 contribute to the active site.

It belongs to the acylphosphatase family.

It catalyses the reaction an acyl phosphate + H2O = a carboxylate + phosphate + H(+). The chain is Acylphosphatase-1 (acyp1) from Xenopus tropicalis (Western clawed frog).